Here is a 700-residue protein sequence, read N- to C-terminus: Polyribonucleotide nucleotidyltransferase (700 aa).

The Mg(2+) site is built by Asp-485 and Asp-491. In terms of domain architecture, KH spans 552-611; sequence PRITTLKINPEKIRDVIGKGGATIRALTEETGTTIELEDDGTVKIASANGDATKEAIRRI. The S1 motif domain maps to 621-689; sequence GTVYNGKVVR…RQGRVRLSMK (69 aa).

This sequence belongs to the polyribonucleotide nucleotidyltransferase family. Component of the RNA degradosome, which is a multiprotein complex involved in RNA processing and mRNA degradation. The cofactor is Mg(2+).

The protein localises to the cytoplasm. The enzyme catalyses RNA(n+1) + phosphate = RNA(n) + a ribonucleoside 5'-diphosphate. Functionally, involved in mRNA degradation. Catalyzes the phosphorolysis of single-stranded polyribonucleotides processively in the 3'- to 5'-direction. This chain is Polyribonucleotide nucleotidyltransferase, found in Shewanella loihica (strain ATCC BAA-1088 / PV-4).